The following is a 131-amino-acid chain: ATP synthase epsilon chain (131 aa).

This sequence belongs to the ATPase epsilon chain family. In terms of assembly, F-type ATPases have 2 components, CF(1) - the catalytic core - and CF(0) - the membrane proton channel. CF(1) has five subunits: alpha(3), beta(3), gamma(1), delta(1), epsilon(1). CF(0) has three main subunits: a, b and c.

Its subcellular location is the cell inner membrane. In terms of biological role, produces ATP from ADP in the presence of a proton gradient across the membrane. This chain is ATP synthase epsilon chain, found in Wolinella succinogenes (strain ATCC 29543 / DSM 1740 / CCUG 13145 / JCM 31913 / LMG 7466 / NCTC 11488 / FDC 602W) (Vibrio succinogenes).